The primary structure comprises 122 residues: Large ribosomal subunit protein uL14 (122 aa).

This sequence belongs to the universal ribosomal protein uL14 family. Part of the 50S ribosomal subunit. Forms a cluster with proteins L3 and L19. In the 70S ribosome, L14 and L19 interact and together make contacts with the 16S rRNA in bridges B5 and B8.

Binds to 23S rRNA. Forms part of two intersubunit bridges in the 70S ribosome. The protein is Large ribosomal subunit protein uL14 of Alkaliphilus metalliredigens (strain QYMF).